The following is a 636-amino-acid chain: Threonine--tRNA ligase (636 aa).

Positions methionine 1 to threonine 63 constitute a TGS domain. Residues aspartate 244–proline 535 are catalytic. Zn(2+) contacts are provided by cysteine 335, histidine 386, and histidine 512.

Belongs to the class-II aminoacyl-tRNA synthetase family. In terms of assembly, homodimer. Zn(2+) serves as cofactor.

The protein localises to the cytoplasm. The catalysed reaction is tRNA(Thr) + L-threonine + ATP = L-threonyl-tRNA(Thr) + AMP + diphosphate + H(+). In terms of biological role, catalyzes the attachment of threonine to tRNA(Thr) in a two-step reaction: L-threonine is first activated by ATP to form Thr-AMP and then transferred to the acceptor end of tRNA(Thr). Also edits incorrectly charged L-seryl-tRNA(Thr). This is Threonine--tRNA ligase from Anaplasma marginale (strain St. Maries).